We begin with the raw amino-acid sequence, 517 residues long: Crotonobetaine/carnitine--CoA ligase (517 aa).

The protein belongs to the ATP-dependent AMP-binding enzyme family.

The enzyme catalyses 4-(trimethylamino)butanoate + ATP + CoA = 4-(trimethylamino)butanoyl-CoA + AMP + diphosphate. The catalysed reaction is crotonobetaine + ATP + CoA = crotonobetainyl-CoA + AMP + diphosphate. It catalyses the reaction (R)-carnitine + ATP + CoA = (R)-carnitinyl-CoA + AMP + diphosphate. The protein operates within amine and polyamine metabolism; carnitine metabolism. In terms of biological role, catalyzes the transfer of CoA to carnitine, generating the initial carnitinyl-CoA needed for the CaiB reaction cycle. Also has activity toward crotonobetaine and gamma-butyrobetaine. The chain is Crotonobetaine/carnitine--CoA ligase from Escherichia coli O157:H7.